The following is a 220-amino-acid chain: Thiopurine S-methyltransferase (220 aa).

Residues Trp14, Leu49, Glu70, and Arg127 each contribute to the S-adenosyl-L-methionine site.

It belongs to the class I-like SAM-binding methyltransferase superfamily. TPMT family.

The protein localises to the cytoplasm. It catalyses the reaction S-adenosyl-L-methionine + a thiopurine = S-adenosyl-L-homocysteine + a thiopurine S-methylether.. In Gluconobacter oxydans (strain 621H) (Gluconobacter suboxydans), this protein is Thiopurine S-methyltransferase.